A 355-amino-acid chain; its full sequence is Methylthioribose-1-phosphate isomerase (355 aa).

Residues 53–55 (RGA), Arg96, and Gln205 each bind substrate. Residue Asp246 is the Proton donor of the active site. Position 256 to 257 (256 to 257 (NK)) interacts with substrate.

Belongs to the eIF-2B alpha/beta/delta subunits family. MtnA subfamily.

The enzyme catalyses 5-(methylsulfanyl)-alpha-D-ribose 1-phosphate = 5-(methylsulfanyl)-D-ribulose 1-phosphate. It functions in the pathway amino-acid biosynthesis; L-methionine biosynthesis via salvage pathway; L-methionine from S-methyl-5-thio-alpha-D-ribose 1-phosphate: step 1/6. Catalyzes the interconversion of methylthioribose-1-phosphate (MTR-1-P) into methylthioribulose-1-phosphate (MTRu-1-P). The polypeptide is Methylthioribose-1-phosphate isomerase (Thermosynechococcus vestitus (strain NIES-2133 / IAM M-273 / BP-1)).